Consider the following 555-residue polypeptide: Sulfite reductase [ferredoxin] (555 aa).

The tract at residues 1–22 (MTTARPAKARNEGQWALGHREP) is disordered. A cross-link (3'-(S-cysteinyl)-tyrosine (Tyr-Cys)) is located at residues 69-161 (YTQREQGYDG…DVGLQTTEAC (93 aa)). [4Fe-4S] cluster contacts are provided by C417, C423, C463, and C467. C467 lines the siroheme pocket.

This sequence belongs to the nitrite and sulfite reductase 4Fe-4S domain family. As to quaternary structure, monomer. The cofactor is siroheme. It depends on [4Fe-4S] cluster as a cofactor.

It catalyses the reaction hydrogen sulfide + 6 oxidized [2Fe-2S]-[ferredoxin] + 3 H2O = sulfite + 6 reduced [2Fe-2S]-[ferredoxin] + 7 H(+). In terms of biological role, catalyzes the reduction of sulfite to sulfide, a step in the biosynthesis of sulfur-containing amino acids and cofactors. This Mycobacterium bovis (strain ATCC BAA-935 / AF2122/97) protein is Sulfite reductase [ferredoxin] (sir).